Consider the following 374-residue polypeptide: Putative glutamate--cysteine ligase 2-1 (374 aa).

This sequence belongs to the glutamate--cysteine ligase type 2 family. YbdK subfamily.

The enzyme catalyses L-cysteine + L-glutamate + ATP = gamma-L-glutamyl-L-cysteine + ADP + phosphate + H(+). Functionally, ATP-dependent carboxylate-amine ligase which exhibits weak glutamate--cysteine ligase activity. The protein is Putative glutamate--cysteine ligase 2-1 of Saccharopolyspora erythraea (strain ATCC 11635 / DSM 40517 / JCM 4748 / NBRC 13426 / NCIMB 8594 / NRRL 2338).